Consider the following 290-residue polypeptide: Feruloyl esterase D (290 aa).

Residues 1-25 form the signal peptide; sequence MAGLHSRLTTFLLLLLSALPAIAAA. The interval 260 to 280 is disordered; sequence HGGDHNPSQRDPGQNDPFAPR.

Belongs to the serine esterase family.

The protein resides in the secreted. The catalysed reaction is feruloyl-polysaccharide + H2O = ferulate + polysaccharide.. Involved in degradation of plant cell walls. Hydrolyzes the feruloyl-arabinose ester bond in arabinoxylans as well as the feruloyl-galactose and feruloyl-arabinose ester bonds in pectin. Active against methyl esters of ferulate (MFA), sinapate (MSA), caffeate (MCA) and p-coumarate (MpCA). The chain is Feruloyl esterase D from Neurospora crassa (strain ATCC 24698 / 74-OR23-1A / CBS 708.71 / DSM 1257 / FGSC 987).